The chain runs to 1040 residues: FHF complex subunit HOOK-interacting protein 1A (1040 aa).

3 disordered regions span residues 555 to 613, 653 to 746, and 769 to 808; these read PQQL…PIDP, SEDM…AAHP, and LMEQ…EDEE. A compositionally biased stretch (basic and acidic residues) spans 653 to 664; that stretch reads SEDMKDSQEEAA. Polar residues predominate over residues 677–690; that stretch reads VPINNGPLLSTQPE. Basic and acidic residues-rich tracts occupy residues 696–719 and 783–804; these read EWNR…REPE and TKEE…KKEL.

Belongs to the FHIP family. May be a component of the FTS/Hook/FHIP complex (FHF complex), composed of AKTIP/FTS, FHIP1B, and one or more members of the Hook family of proteins HOOK1, HOOK2, and HOOK3. May interact directly with AKTIP/FTS.

Functionally, probable component of the FTS/Hook/FHIP complex (FHF complex). FHF complex promotes the distribution of AP-4 complex to the perinuclear area of the cell. The protein is FHF complex subunit HOOK-interacting protein 1A of Homo sapiens (Human).